The chain runs to 204 residues: CDP-archaeol synthase (204 aa).

6 helical membrane passes run 5 to 25 (VYAC…YVIL), 43 to 63 (MLWV…SRLV), 91 to 111 (FEGF…LAYA), 116 to 136 (GVSA…GAFV), 147 to 167 (PAIL…QGLF), and 175 to 195 (VVVA…MAAF).

This sequence belongs to the CDP-archaeol synthase family. The cofactor is Mg(2+).

The protein localises to the cell membrane. It catalyses the reaction 2,3-bis-O-(geranylgeranyl)-sn-glycerol 1-phosphate + CTP + H(+) = CDP-2,3-bis-O-(geranylgeranyl)-sn-glycerol + diphosphate. It functions in the pathway membrane lipid metabolism; glycerophospholipid metabolism. Its function is as follows. Catalyzes the formation of CDP-2,3-bis-(O-geranylgeranyl)-sn-glycerol (CDP-archaeol) from 2,3-bis-(O-geranylgeranyl)-sn-glycerol 1-phosphate (DGGGP) and CTP. This reaction is the third ether-bond-formation step in the biosynthesis of archaeal membrane lipids. The polypeptide is CDP-archaeol synthase (Thermofilum pendens (strain DSM 2475 / Hrk 5)).